We begin with the raw amino-acid sequence, 2697 residues long: Target of rapamycin homolog (2697 aa).

The disordered stretch occupies residues 1–25; the sequence is MLQQHGISFQMNADRQNKAATTSNR. HEAT repeat units lie at residues 235–272, 649–687, 689–726, 731–768, 815–853, 863–900, and 1073–1110; these read LRVN…IVSQ, QTIY…PFLA, LAQP…LNPA, RLRL…QSPK, KNLK…STAY, SLLD…YTHK, and KYTG…LTHC. The FAT domain maps to 1438–2153; it reads VLGRWAEQTK…IYALTVASRS (716 aa). Disordered stretches follow at residues 1945-1981 and 2017-2039; these read TVIS…PQPA and SNSS…PSNS. Residues 1969–1981 are compositionally biased toward pro residues; that stretch reads SPPPPAQKSPQPA. The span at 2030-2039 shows a compositional bias: polar residues; the sequence is PLSNDSPSNS. One can recognise a PI3K/PI4K catalytic domain in the interval 2332–2647; it reads FSSKMNVITS…TTDSIMETIK (316 aa). Residues 2338–2344 are G-loop; the sequence is VITSKQR. The tract at residues 2512 to 2520 is catalytic loop; the sequence is GLGDRHPSN. An activation loop region spans residues 2532-2557; the sequence is HIDFGDCFEVAMLREKFPERVPFRLT. The interval 2615–2635 is disordered; it reads DPKTRKDTGGRQNMAGAVLPS. Residues 2665–2697 enclose the FATC domain; it reads EPLQVTEQLAMLTEQATSPLNLCQSYIGWCPFW.

Belongs to the PI3/PI4-kinase family. As to expression, ubiquitous. Expressed in all major tissues and organs, including the intestine, gonads and hypodermal cells. Expressed in neurons.

The protein localises to the nucleus. The enzyme catalyses L-seryl-[protein] + ATP = O-phospho-L-seryl-[protein] + ADP + H(+). The catalysed reaction is L-threonyl-[protein] + ATP = O-phospho-L-threonyl-[protein] + ADP + H(+). In terms of biological role, serine/threonine-protein kinase that regulates the mRNA translation machinery, probably by modulating the activity of translation factors such as eIF-4G and eIF-2. It may have some protein kinase activity instead of lipid kinase activity. May play a role in P-granule degradation by autophagy in somatic cells during embryogenesis. Required, during larval development, for the establishment of the proper number of germline progenitors, probably upstream of rsks-1 and ife-1. Required for larval development. May act as a mediator of lifespan regulation by insulin signaling and nutrient sensing. In Caenorhabditis elegans, this protein is Target of rapamycin homolog.